We begin with the raw amino-acid sequence, 186 residues long: UPF0301 protein Swoo_1337 (186 aa).

It belongs to the UPF0301 (AlgH) family.

This chain is UPF0301 protein Swoo_1337, found in Shewanella woodyi (strain ATCC 51908 / MS32).